The primary structure comprises 324 residues: Gamma-soluble NSF attachment protein (324 aa).

A compositionally biased stretch (polar residues) spans 285–298 (NPTINSTAPQQQYS). The segment at 285-324 (NPTINSTAPQQQYSNTTTTTTNNTNNNNPTSQQDDDEDVL) is disordered. Over residues 299–312 (NTTTTTTNNTNNNN) the composition is skewed to low complexity.

Belongs to the SNAP family. In terms of assembly, interacts with nsfA and probably SNARE proteins.

The protein localises to the cytoplasmic vesicle membrane. May be required for vesicular transport between the endoplasmic reticulum and the Golgi apparatus. Involved in vesicle fusion with nsfA and probably SNARE proteins. The chain is Gamma-soluble NSF attachment protein (snpC) from Dictyostelium discoideum (Social amoeba).